Here is a 421-residue protein sequence, read N- to C-terminus: Solute carrier family 35 member F3 (421 aa).

Positions 25–53 (EGEERPREPPGPAEAQAPAGTEAGGRTSR) are disordered. Residues 37–49 (AEAQAPAGTEAGG) are compositionally biased toward low complexity. Transmembrane regions (helical) follow at residues 66-86 (VFWGVAVVFCVCASWAGSTQL), 98-118 (FTLTWFATNWNFLFFPLYYAG), 149-169 (VFFTKAAPFGVLWTLTNYLYL), 179-199 (DVSVLFCCNKSFVFLLSWIVL), 208-228 (IVAAILAIAGIVMMTYADGFH), 232-252 (VIGIALVVGSASMSALYKVLF), 266-286 (LFLSILGVFNILFITCIPVIL), 305-325 (LCGFSILLLTFNIVLNFGIAV), 326-346 (TYPTLMSLGIVLSVPVNAVVD), and 352-372 (IVFNGVRVIAIIIIGLGFLLL). The interval 394 to 421 (KEETAESSGDLGTGPQSRSRRARPSFAR) is disordered. Basic residues predominate over residues 411 to 421 (RSRRARPSFAR).

This sequence belongs to the SLC35F solute transporter family.

It is found in the membrane. The enzyme catalyses thiamine(in) = thiamine(out). Mediates thiamine transport. In Mus musculus (Mouse), this protein is Solute carrier family 35 member F3 (Slc35f3).